We begin with the raw amino-acid sequence, 547 residues long: Chaperonin GroEL (547 aa).

Residues 30 to 33, Lys-51, 87 to 91, Gly-415, 479 to 481, and Asp-495 contribute to the ATP site; these read TLGP, DGTTT, and NAA. The segment at 526–547 is disordered; sequence KEEKSDLSVPPQGGMGGMGGMM. Over residues 538 to 547 the composition is skewed to gly residues; that stretch reads GGMGGMGGMM.

It belongs to the chaperonin (HSP60) family. Forms a cylinder of 14 subunits composed of two heptameric rings stacked back-to-back. Interacts with the co-chaperonin GroES.

The protein localises to the cytoplasm. It catalyses the reaction ATP + H2O + a folded polypeptide = ADP + phosphate + an unfolded polypeptide.. In terms of biological role, together with its co-chaperonin GroES, plays an essential role in assisting protein folding. The GroEL-GroES system forms a nano-cage that allows encapsulation of the non-native substrate proteins and provides a physical environment optimized to promote and accelerate protein folding. The sequence is that of Chaperonin GroEL from Buchnera aphidicola subsp. Tetraneura caerulescens.